Consider the following 342-residue polypeptide: Inositol-tetrakisphosphate 1-kinase 1 (342 aa).

Lys28 and Lys70 together coordinate 1D-myo-inositol 6-phosphate. The ATP site is built by Arg105 and Lys155. The ATP-grasp domain occupies 116–332; it reads DHAADQDSTF…HKDGVGNQQE (217 aa). 1D-myo-inositol 6-phosphate contacts are provided by Gly161 and His166. ATP contacts are provided by His166, Gln187, and Val190. 1D-myo-inositol 6-phosphate-binding residues include Lys198 and Tyr200. Position 213 (Ser213) interacts with ATP. Positions 219–247 are catalytic specificity elements (CSE); the sequence is PEDDASAQGSVSFSQVSNLPTERTAEEYY. Residue Asn280 coordinates 1D-myo-inositol 6-phosphate. Asp282 serves as a coordination point for Mg(2+). Ile296, Asp297, and Asn299 together coordinate ATP. Residues Asp297 and Asn299 each contribute to the Mg(2+) site. Positions 299, 303, and 306 each coordinate 1D-myo-inositol 6-phosphate.

The protein belongs to the ITPK1 family. As to quaternary structure, monomer. Mg(2+) is required as a cofactor. In terms of tissue distribution, expressed in the embryo of 15 day after pollination. Expressed in kernels at earlier stages but at very low levels. Expression in the embryo peaks at 15 days after pollination and then declines. No expression is detected from endosperm and vegetative tissues.

The catalysed reaction is 1D-myo-inositol 3,4,5,6-tetrakisphosphate + ATP = 1D-myo-inositol 1,3,4,5,6-pentakisphosphate + ADP + H(+). It carries out the reaction 1D-myo-inositol 1,3,4-trisphosphate + ATP = 1D-myo-inositol 1,3,4,5-tetrakisphosphate + ADP + H(+). The enzyme catalyses 1D-myo-inositol 1,3,4-trisphosphate + ATP = 1D-myo-inositol 1,3,4,6-tetrakisphosphate + ADP + H(+). It catalyses the reaction 1D-myo-inositol 1,2,3,4,5-pentakisphosphate + ATP = 3-diphospho-1D-myo-inositol 1,2,4,5-tetrakisphosphate + ADP. The catalysed reaction is 1D-myo-inositol hexakisphosphate + ATP = 5-diphospho-1D-myo-inositol 1,2,3,4,6-pentakisphosphate + ADP. Kinase that can phosphorylate various inositol polyphosphate such as Ins(3,4,5,6)P4 or Ins(1,3,4)P3 and participates in phytic acid biosynthesis in developing seeds. Phosphorylates Ins(3,4,5,6)P4 at position 1 to form Ins(1,3,4,5,6)P5. This reaction is thought to have regulatory importance, since Ins(3,4,5,6)P4 is an inhibitor of plasma membrane Ca(2+)-activated Cl(-) channels, while Ins(1,3,4,5,6)P5 is not. Also phosphorylates Ins(1,3,4)P3 on O-5 and O-6 to form Ins(1,3,4,6)P4, an essential molecule in the hexakisphosphate (InsP6) pathway. Also able to phosphorylate Ins(3,5,6)P3 but not Ins(1,4,5)P3, Ins(2,4,5)P3, Ins(1,3,4,6)P4 nor Ins(1,3,5,6)P4. Has higher specific activity on Ins(3,4,5,6)P4 than Ins(1,3,4)P3 and Ins(3,5,6)P3. Can also could use Ins(1,2,5,6)P4 as a substrate. Able to add a beta-phosphate to the 3 positions of Ins(1,2,3,4,5)P5 and to add beta-phosphate to InsP6 to yield 5-InsP7, thus exhibiting InsP6 kinase activity. Also has Ins(1,3,4,5,6)P5 phosphatase activity. The sequence is that of Inositol-tetrakisphosphate 1-kinase 1 from Zea mays (Maize).